The primary structure comprises 96 residues: Co-chaperonin GroES (96 aa).

It belongs to the GroES chaperonin family. In terms of assembly, heptamer of 7 subunits arranged in a ring. Interacts with the chaperonin GroEL.

The protein localises to the cytoplasm. In terms of biological role, together with the chaperonin GroEL, plays an essential role in assisting protein folding. The GroEL-GroES system forms a nano-cage that allows encapsulation of the non-native substrate proteins and provides a physical environment optimized to promote and accelerate protein folding. GroES binds to the apical surface of the GroEL ring, thereby capping the opening of the GroEL channel. This is Co-chaperonin GroES from Colwellia maris.